Reading from the N-terminus, the 534-residue chain is NAD(P)H-quinone oxidoreductase chain 4 (534 aa).

Helical transmembrane passes span 12–32 (FPWLSASILFPIGSAFVIPFF), 44–64 (FALSIALTTFLITVGSYINGF), 94–114 (ISMPLILLTSFITALAVLAAW), 120–140 (PKLFFFLILVMDGGQIAVFAV), 144–164 (LLFFLTWELELIPVYLLLAIW), 176–196 (FIIYTAGSSIFILLAALAMGF), 220–240 (ILCYVGLLIAFGVKLPIVPLH), 251–271 (TAPVHMLLAGILLKMGGYALL), 285–305 (FAPLLIVLGVVNIIYAALTSF), 314–334 (IAYSSISHMGFVLIGIGSFSS), 340–360 (AMLQMVSHGLIGASLFFLVGA), 384–404 (FALWTACSLASLALPGMSGFV), 425–445 (VIMASLAAIGVILTPIYLLSM), and 472–492 (VYIIACLLLPIIGIGLYPRLV).

This sequence belongs to the complex I subunit 4 family.

Its subcellular location is the cellular thylakoid membrane. The catalysed reaction is a plastoquinone + NADH + (n+1) H(+)(in) = a plastoquinol + NAD(+) + n H(+)(out). The enzyme catalyses a plastoquinone + NADPH + (n+1) H(+)(in) = a plastoquinol + NADP(+) + n H(+)(out). In terms of biological role, NDH-1 shuttles electrons from NAD(P)H, via FMN and iron-sulfur (Fe-S) centers, to quinones in the respiratory chain. The immediate electron acceptor for the enzyme in this species is believed to be plastoquinone. Couples the redox reaction to proton translocation (for every two electrons transferred, four hydrogen ions are translocated across the cytoplasmic membrane), and thus conserves the redox energy in a proton gradient. The chain is NAD(P)H-quinone oxidoreductase chain 4 from Prochlorococcus marinus (strain MIT 9312).